The following is a 472-amino-acid chain: MSIKNAVKLIEKSKARFVDLRFTDTKGKQHHFTVPARIVLEGPEEWFENGQAFDGSSIGGWKGIQASDMQLRPDASTAFVDPFYDDVTVVITCDVIDPADGQGYDRDPRSIARRAEAYLKSSGIGDTAYFGPEPEFFVFDGVEFETDMHKTRYEITSESGAWASGLHMDGQNTGHRPAVKGGYAPVAPIDCGQDLRSAMVNILEGLGIEVEVHHSEVGTGSQMEIGTRFATLVKRADQTQDMKYVIQNVAHNFGKTATFMPKPIMGDNGSGMHVHQSIWKDGQNLFAGDGYAGLSDTALYYIGGIIKHAKALNAITNPSTNSYKRLVPHFEAPTKLAYSAKNRSASIRIPSVNSSKARRIEARFPDPTANPYLAFAALLMAGLDGIQNKIHPGDPADKNLYDLPPEEDALVPTVCASLEEALAALKADHEFLLRGGVFSKDWIDSYIAFKEEDVRRIRMAPHPLEFEMYYSL.

In terms of domain architecture, GS beta-grasp spans 13–101 (SKARFVDLRF…TCDVIDPADG (89 aa)). Positions 108-472 (PRSIARRAEA…PLEFEMYYSL (365 aa)) constitute a GS catalytic domain. Residues E133 and E135 each contribute to the Mg(2+) site. E211 serves as a coordination point for ATP. Residues E216 and E224 each coordinate Mg(2+). L-glutamate-binding positions include 268–269 (NG) and G269. A Mg(2+)-binding site is contributed by H273. Residues 275-277 (HQS) and S277 each bind ATP. R325, E331, and R343 together coordinate L-glutamate. ATP is bound by residues R343, R348, and K356. E361 is a Mg(2+) binding site. R363 serves as a coordination point for L-glutamate. Residue Y401 is modified to O-AMP-tyrosine.

The protein belongs to the glutamine synthetase family. Oligomer of 12 subunits arranged in the form of two hexameric ring. Mg(2+) serves as cofactor.

It localises to the cytoplasm. The catalysed reaction is L-glutamate + NH4(+) + ATP = L-glutamine + ADP + phosphate + H(+). With respect to regulation, the activity of this enzyme could be controlled by adenylation under conditions of abundant glutamine. Functionally, catalyzes the ATP-dependent biosynthesis of glutamine from glutamate and ammonia. The protein is Glutamine synthetase of Neisseria gonorrhoeae.